Here is a 461-residue protein sequence, read N- to C-terminus: GTPase Era, mitochondrial (461 aa).

Residues Met1–Ala35 constitute a mitochondrion transit peptide. The tract at residues Ala39–Lys73 is disordered. Residues Lys89 to Gly354 enclose the Era-type G domain. The G1 stretch occupies residues Gly97 to Ser104. A GTP-binding site is contributed by Gly97–Ser104. The tract at residues His123–Cys127 is G2. The tract at residues Asp144–Gly147 is G3. GTP is bound by residues Asp144–Leu148 and Asn213–Asp216. A G4 region spans residues Asn213–Asp216. Residues Lys260–Asn319 are disordered. Residues Asn269–Gln284 are compositionally biased toward basic and acidic residues. A compositionally biased stretch (polar residues) spans Glu285–Asp303. The span at Thr304–Asn319 shows a compositional bias: basic and acidic residues. The G5 stretch occupies residues Leu332–Ala334. Residues Ile380–Ser461 form the KH type-2 domain.

The protein belongs to the TRAFAC class TrmE-Era-EngA-EngB-Septin-like GTPase superfamily. Era GTPase family.

Its subcellular location is the mitochondrion matrix. The protein localises to the mitochondrion inner membrane. Probable GTPase that plays a role in the mitochondrial ribosomal small subunit assembly. Specifically binds the 12S mitochondrial rRNA (12S mt-rRNA) to a 33 nucleotide section delineating the 3' terminal stem-loop region. May act as a chaperone that protects the 12S mt-rRNA on the 28S mitoribosomal subunit during ribosomal small subunit assembly. The chain is GTPase Era, mitochondrial (ERAL1) from Gallus gallus (Chicken).